The primary structure comprises 94 residues: Acylphosphatase (94 aa).

Residues R8–R94 form the Acylphosphatase-like domain. Catalysis depends on residues R23 and N41.

This sequence belongs to the acylphosphatase family.

The enzyme catalyses an acyl phosphate + H2O = a carboxylate + phosphate + H(+). In Mycobacterium sp. (strain KMS), this protein is Acylphosphatase (acyP).